Reading from the N-terminus, the 218-residue chain is Eukaryotic translation initiation factor 4E-1 (218 aa).

Residues 1 to 11 (MQTEQPPKESQ) are compositionally biased toward basic and acidic residues. Disordered regions lie at residues 1–20 (MQTE…SEPQ) and 198–218 (FSAH…RMSV). The segment covering 206-218 (KSGSTRAKTRMSV) has biased composition (polar residues).

The protein belongs to the eukaryotic initiation factor 4E family. As to quaternary structure, eIF4F is a multi-subunit complex, the composition of which varies with external and internal environmental conditions. It is composed of at least eIF4A, eIF4E and eIF4G. eIF4E is also known to interact with other partners.

Functionally, recognizes and binds the 7-methylguanosine-containing mRNA cap during an early step in the initiation of protein synthesis and facilitates ribosome binding by inducing the unwinding of the mRNAs secondary structures. The protein is Eukaryotic translation initiation factor 4E-1 (tif451) of Schizosaccharomyces pombe (strain 972 / ATCC 24843) (Fission yeast).